The following is a 338-amino-acid chain: Fe(3+)-binding periplasmic protein (338 aa).

The first 26 residues, 1–26 (MKLRISSLGPVALLASSMMLAFGAQA), serve as a signal peptide directing secretion. The Fe cation site is built by histidine 40, glutamate 88, tyrosine 224, and tyrosine 225.

It belongs to the bacterial solute-binding protein 1 family. As to quaternary structure, the complex is composed of two ATP-binding proteins (FbpC), two transmembrane proteins (FbpB) and a solute-binding protein (FbpA).

It localises to the periplasm. In terms of biological role, part of the ABC transporter complex FbpABC (TC 3.A.1.10.1) involved in Fe(3+) ions import. This protein specifically binds Fe(3+) and is involved in its transmembrane transport. The sequence is that of Fe(3+)-binding periplasmic protein (fbpA) from Serratia marcescens.